A 472-amino-acid polypeptide reads, in one-letter code: GTPase Der (472 aa).

EngA-type G domains are found at residues 3-166 (PIIA…IQNN) and 188-361 (IKLA…HCST). GTP-binding positions include 9–16 (GRPNVGKS), 56–60 (DTGGI), 118–121 (NKID), 194–201 (GSSNVGKS), 241–245 (DTAGL), and 306–309 (NKWD). A KH-like domain is found at 362 to 446 (KRISTALLTK…PIRIQFNEPA (85 aa)).

Belongs to the TRAFAC class TrmE-Era-EngA-EngB-Septin-like GTPase superfamily. EngA (Der) GTPase family. As to quaternary structure, associates with the 50S ribosomal subunit.

Its function is as follows. GTPase that plays an essential role in the late steps of ribosome biogenesis. The protein is GTPase Der of Baumannia cicadellinicola subsp. Homalodisca coagulata.